A 296-amino-acid chain; its full sequence is N-acetylmuramic acid 6-phosphate etherase (296 aa).

An SIS domain is found at 54 to 217 (VIASFQQGGR…STTAMVGIGK (164 aa)). The active-site Proton donor is Glu82. Residue Glu113 is part of the active site.

This sequence belongs to the GCKR-like family. MurNAc-6-P etherase subfamily. As to quaternary structure, homodimer.

The catalysed reaction is N-acetyl-D-muramate 6-phosphate + H2O = N-acetyl-D-glucosamine 6-phosphate + (R)-lactate. The protein operates within amino-sugar metabolism; N-acetylmuramate degradation. Functionally, specifically catalyzes the cleavage of the D-lactyl ether substituent of MurNAc 6-phosphate, producing GlcNAc 6-phosphate and D-lactate. The protein is N-acetylmuramic acid 6-phosphate etherase of Shouchella clausii (strain KSM-K16) (Alkalihalobacillus clausii).